Consider the following 249-residue polypeptide: Type III pantothenate kinase (249 aa).

Asp-6 to Lys-13 lines the ATP pocket. Substrate is bound by residues Tyr-93 and Gly-100 to Arg-103. Asp-102 serves as the catalytic Proton acceptor. Residue Asp-122 coordinates K(+). Thr-125 contacts ATP. Thr-181 lines the substrate pocket.

Belongs to the type III pantothenate kinase family. As to quaternary structure, homodimer. Requires NH4(+) as cofactor. K(+) is required as a cofactor.

The protein resides in the cytoplasm. It carries out the reaction (R)-pantothenate + ATP = (R)-4'-phosphopantothenate + ADP + H(+). Its pathway is cofactor biosynthesis; coenzyme A biosynthesis; CoA from (R)-pantothenate: step 1/5. Catalyzes the phosphorylation of pantothenate (Pan), the first step in CoA biosynthesis. The sequence is that of Type III pantothenate kinase from Pseudomonas fluorescens (strain SBW25).